Reading from the N-terminus, the 204-residue chain is Somatotropin (204 aa).

The first 17 residues, 1–17 (MDRVVLLLSVLSLGVSS), serve as a signal peptide directing secretion. Glutamine 18 is subject to Pyrrolidone carboxylic acid. 2 cysteine pairs are disulfide-bonded: cysteine 69–cysteine 177 and cysteine 194–cysteine 202.

It belongs to the somatotropin/prolactin family.

The protein resides in the secreted. In terms of biological role, growth hormone plays an important role in growth control and is involved in the regulation of several anabolic processes. Implicated as an osmoregulatory substance important for seawater adaptation. The sequence is that of Somatotropin (gh) from Seriola quinqueradiata (Five-ray yellowtail).